Consider the following 354-residue polypeptide: Cellular communication network factor 6 (354 aa).

The first 23 residues, 1–23, serve as a signal peptide directing secretion; that stretch reads MQGLLFSTLLLAGLAQFCCRVQG. The IGFBP N-terminal domain maps to 44–117; sequence RKQFCHWPCK…RYETGVCAYL (74 aa). Intrachain disulfides connect cysteine 48–cysteine 72, cysteine 52–cysteine 74, cysteine 54–cysteine 75, cysteine 61–cysteine 78, cysteine 86–cysteine 100, and cysteine 92–cysteine 114. Residue asparagine 178 is glycosylated (N-linked (GlcNAc...) asparagine). The TSP type-1 domain maps to 208-253; it reads KCLVQATKWTPCSRTCGMGISNRVTNENSNCEMRKEKRLCYIQPCD. 5 disulfides stabilise this stretch: cysteine 268/cysteine 305, cysteine 285/cysteine 319, cysteine 296/cysteine 335, cysteine 299/cysteine 337, and cysteine 304/cysteine 341. A CTCK domain is found at 268–342; the sequence is CQPTFQLSKA…TSCVCQRNCR (75 aa). A glycan (N-linked (GlcNAc...) asparagine) is linked at asparagine 308.

This sequence belongs to the CCN family. As to expression, predominant expression in adult kidney and testis and fetal kidney. Weaker expression found in placenta, ovary, prostate and small intestine. Also expressed in skeletally-derived cells such as synoviocytes and articular cartilage chondrocytes.

Its subcellular location is the secreted. It localises to the mitochondrion. In terms of biological role, plays a role in mitochondrial electron transport and mitochondrial respiration. Through its regulation of the mitochondrial function may play a role in normal postnatal skeletal growth and cartilage homeostasis. This Homo sapiens (Human) protein is Cellular communication network factor 6.